Here is a 235-residue protein sequence, read N- to C-terminus: MRFDPPLEEGRLLRRYKRFLADIETASGEPMTIHCANTGSMLNCMSEGCRVWFSRSNDPKRKLPGSWEISETPQGRLACINTARANALVEEALRAGLIAELAGFTALKREVPYGVENSRADFRLDYPSGPVFVEVKSVTLGFDDSDVAAFPDAVTLRGARHLRELAALSRLGVRTVLLYCVNLSGIVAVRAAEDIDPAYAAGLREARAAGVEVLAYGAELSPEGISLVRRLDVLT.

Belongs to the SfsA family.

This Ectopseudomonas mendocina (strain ymp) (Pseudomonas mendocina) protein is Sugar fermentation stimulation protein homolog.